The following is a 139-amino-acid chain: Holo-[acyl-carrier-protein] synthase (139 aa).

The Mg(2+) site is built by D8 and E61.

This sequence belongs to the P-Pant transferase superfamily. AcpS family. Requires Mg(2+) as cofactor.

Its subcellular location is the cytoplasm. The catalysed reaction is apo-[ACP] + CoA = holo-[ACP] + adenosine 3',5'-bisphosphate + H(+). Functionally, transfers the 4'-phosphopantetheine moiety from coenzyme A to a Ser of acyl-carrier-protein. The chain is Holo-[acyl-carrier-protein] synthase from Bradyrhizobium sp. (strain BTAi1 / ATCC BAA-1182).